The chain runs to 253 residues: Phosphate import ATP-binding protein PstB (253 aa).

The ABC transporter domain maps to 7 to 249 (ASAKNLNLWY…PQSSKTKRYI (243 aa)). ATP is bound at residue 39-46 (GPSGCGKS).

Belongs to the ABC transporter superfamily. Phosphate importer (TC 3.A.1.7) family. In terms of assembly, the complex is composed of two ATP-binding proteins (PstB), two transmembrane proteins (PstC and PstA) and a solute-binding protein (PstS).

It localises to the cell inner membrane. It catalyses the reaction phosphate(out) + ATP + H2O = ADP + 2 phosphate(in) + H(+). Part of the ABC transporter complex PstSACB involved in phosphate import. Responsible for energy coupling to the transport system. The sequence is that of Phosphate import ATP-binding protein PstB from Ehrlichia ruminantium (strain Gardel).